Here is a 385-residue protein sequence, read N- to C-terminus: Putative UDP-N-acetylglucosamine 2-epimerase (385 aa).

Belongs to the UDP-N-acetylglucosamine 2-epimerase family.

It localises to the cytoplasm. The enzyme catalyses UDP-N-acetyl-alpha-D-glucosamine = UDP-N-acetyl-alpha-D-mannosamine. The chain is Putative UDP-N-acetylglucosamine 2-epimerase from Clostridium acetobutylicum (strain ATCC 824 / DSM 792 / JCM 1419 / IAM 19013 / LMG 5710 / NBRC 13948 / NRRL B-527 / VKM B-1787 / 2291 / W).